The following is a 66-amino-acid chain: Large ribosomal subunit protein uL29 (66 aa).

Belongs to the universal ribosomal protein uL29 family.

This Mesorhizobium japonicum (strain LMG 29417 / CECT 9101 / MAFF 303099) (Mesorhizobium loti (strain MAFF 303099)) protein is Large ribosomal subunit protein uL29.